The sequence spans 436 residues: GTPase Der (436 aa).

2 EngA-type G domains span residues Pro4–Glu167 and Val176–Ser351. GTP-binding positions include Gly10–Ser17, Asp57–Ile61, Asn119–Asp122, Gly182–Ser189, Asp229–Met233, and Asn294–Asp297. The region spanning Leu352 to Lys436 is the KH-like domain.

The protein belongs to the TRAFAC class TrmE-Era-EngA-EngB-Septin-like GTPase superfamily. EngA (Der) GTPase family. As to quaternary structure, associates with the 50S ribosomal subunit.

In terms of biological role, GTPase that plays an essential role in the late steps of ribosome biogenesis. The sequence is that of GTPase Der from Listeria welshimeri serovar 6b (strain ATCC 35897 / DSM 20650 / CCUG 15529 / CIP 8149 / NCTC 11857 / SLCC 5334 / V8).